Here is a 476-residue protein sequence, read N- to C-terminus: Bifunctional protein HldE (476 aa).

Positions 1–319 (MKVSLPAFEK…EALALHHGES (319 aa)) are ribokinase. Position 195–198 (195–198 (NMSE)) interacts with ATP. The active site involves Asp264. Residues 345–476 (MTNGCFDILH…AIIQNIMANQ (132 aa)) are cytidylyltransferase.

This sequence in the N-terminal section; belongs to the carbohydrate kinase PfkB family. In the C-terminal section; belongs to the cytidylyltransferase family. Homodimer.

The catalysed reaction is D-glycero-beta-D-manno-heptose 7-phosphate + ATP = D-glycero-beta-D-manno-heptose 1,7-bisphosphate + ADP + H(+). It carries out the reaction D-glycero-beta-D-manno-heptose 1-phosphate + ATP + H(+) = ADP-D-glycero-beta-D-manno-heptose + diphosphate. It participates in nucleotide-sugar biosynthesis; ADP-L-glycero-beta-D-manno-heptose biosynthesis; ADP-L-glycero-beta-D-manno-heptose from D-glycero-beta-D-manno-heptose 7-phosphate: step 1/4. The protein operates within nucleotide-sugar biosynthesis; ADP-L-glycero-beta-D-manno-heptose biosynthesis; ADP-L-glycero-beta-D-manno-heptose from D-glycero-beta-D-manno-heptose 7-phosphate: step 3/4. In terms of biological role, catalyzes the phosphorylation of D-glycero-D-manno-heptose 7-phosphate at the C-1 position to selectively form D-glycero-beta-D-manno-heptose-1,7-bisphosphate. Its function is as follows. Catalyzes the ADP transfer from ATP to D-glycero-beta-D-manno-heptose 1-phosphate, yielding ADP-D-glycero-beta-D-manno-heptose. This chain is Bifunctional protein HldE, found in Shewanella baltica (strain OS185).